Consider the following 374-residue polypeptide: Glutamate 5-kinase (374 aa).

Residue Lys9 coordinates ATP. Substrate is bound by residues Ser49, Asp136, and Asn148. Residues 168-169 (TD) and 210-216 (TGGMRSK) each bind ATP. Residues 276 to 354 (AGMITVDSGA…EEARQYSYLH (79 aa)) enclose the PUA domain.

This sequence belongs to the glutamate 5-kinase family.

The protein localises to the cytoplasm. It carries out the reaction L-glutamate + ATP = L-glutamyl 5-phosphate + ADP. Its pathway is amino-acid biosynthesis; L-proline biosynthesis; L-glutamate 5-semialdehyde from L-glutamate: step 1/2. In terms of biological role, catalyzes the transfer of a phosphate group to glutamate to form L-glutamate 5-phosphate. The sequence is that of Glutamate 5-kinase from Geobacillus kaustophilus (strain HTA426).